A 143-amino-acid polypeptide reads, in one-letter code: Sirohydrochlorin cobaltochelatase (143 aa).

His9 functions as the Proton acceptor in the catalytic mechanism. A Co(2+)-binding site is contributed by His9. Residue His9 coordinates Ni(2+). Substrate-binding positions include Glu45 and 70–75 (LAHGIH). His75 is a binding site for Co(2+). His75 contacts Ni(2+).

This sequence belongs to the CbiX family. CbiXS subfamily. As to quaternary structure, homotetramer; dimer of dimers.

The catalysed reaction is Co-sirohydrochlorin + 2 H(+) = sirohydrochlorin + Co(2+). The enzyme catalyses Ni-sirohydrochlorin + 2 H(+) = sirohydrochlorin + Ni(2+). It functions in the pathway cofactor biosynthesis; adenosylcobalamin biosynthesis; cob(II)yrinate a,c-diamide from sirohydrochlorin (anaerobic route): step 1/10. In terms of biological role, catalyzes the insertion of Co(2+) into sirohydrochlorin as part of the anaerobic pathway to cobalamin biosynthesis. Involved in the biosynthesis of the unique nickel-containing tetrapyrrole coenzyme F430, the prosthetic group of methyl-coenzyme M reductase (MCR), which plays a key role in methanogenesis and anaerobic methane oxidation. Catalyzes the insertion of Ni(2+) into sirohydrochlorin to yield Ni-sirohydrochlorin. This is Sirohydrochlorin cobaltochelatase from Methanocaldococcus jannaschii (strain ATCC 43067 / DSM 2661 / JAL-1 / JCM 10045 / NBRC 100440) (Methanococcus jannaschii).